The chain runs to 322 residues: Coelomocyte uptake defective protein 15 (322 aa).

The first 20 residues, 1-20 (MVNSLSRILFCSLLIFSVIS), serve as a signal peptide directing secretion. N-linked (GlcNAc...) asparagine glycans are attached at residues N62, N98, N144, N170, N180, N183, and N222. A helical membrane pass occupies residues 244–264 (LFGIMITFGTLLLLTALFYAA).

This sequence belongs to the OSTM1 family.

The protein localises to the membrane. Functionally, modulates the transport of substances from the endosomal to lysosomal compartments. Plays a role in lysosome formation and function in coelomocytes. The protein is Coelomocyte uptake defective protein 15 of Caenorhabditis elegans.